The sequence spans 392 residues: 2-oxoisovalerate dehydrogenase subunit beta, mitochondrial (392 aa).

Residues 1-50 (MAAVAAFAGWLLRLRAAGADGPWRRLCGAGLSRGFLQSASAYGAAAQRRQ) constitute a mitochondrion transit peptide. Tyr-152 serves as a coordination point for thiamine diphosphate. Positions 178, 180, 181, 228, and 231 each coordinate K(+). Lys-232 carries the N6-acetyllysine modification. Asn-233 is a K(+) binding site. Lys-241 is subject to N6-acetyllysine.

In terms of assembly, heterotetramer of 2 alpha/BCKDHA and 2 beta chains/BCKDHB that forms the branched-chain alpha-keto acid decarboxylase (E1) component of the BCKD complex. The branched-chain alpha-ketoacid dehydrogenase is a large complex composed of three major building blocks E1, E2 and E3. It is organized around E2, a 24-meric cubic core composed of DBT, to which are associated 6 to 12 copies of E1, and approximately 6 copies of the dehydrogenase E3, a DLD dimer. Thiamine diphosphate is required as a cofactor.

Its subcellular location is the mitochondrion matrix. It catalyses the reaction N(6)-[(R)-lipoyl]-L-lysyl-[protein] + 3-methyl-2-oxobutanoate + H(+) = N(6)-[(R)-S(8)-2-methylpropanoyldihydrolipoyl]-L-lysyl-[protein] + CO2. Together with BCKDHA forms the heterotetrameric E1 subunit of the mitochondrial branched-chain alpha-ketoacid dehydrogenase (BCKD) complex. The BCKD complex catalyzes the multi-step oxidative decarboxylation of alpha-ketoacids derived from the branched-chain amino-acids valine, leucine and isoleucine producing CO2 and acyl-CoA which is subsequently utilized to produce energy. The E1 subunit catalyzes the first step with the decarboxylation of the alpha-ketoacid forming an enzyme-product intermediate. A reductive acylation mediated by the lipoylamide cofactor of E2 extracts the acyl group from the E1 active site for the next step of the reaction. The protein is 2-oxoisovalerate dehydrogenase subunit beta, mitochondrial (BCKDHB) of Bos taurus (Bovine).